We begin with the raw amino-acid sequence, 183 residues long: Capsid protein (183 aa).

The interval 143–183 (LPENAVVRRRGRSPRRRTPSPRRRRSQSPRRRRSQSRGSQC) is disordered. Residues 149 to 177 (VRRRGRSPRRRTPSPRRRRSQSPRRRRSQ) show a composition bias toward basic residues. Phosphoserine; by host occurs at positions 155, 162, and 170. One copy of the 1; half-length repeat lies at 155-161 (SPRRRTP). The 3 X 8 AA repeats of S-P-R-R-R-[PR]-S-Q stretch occupies residues 155 to 177 (SPRRRTPSPRRRRSQSPRRRRSQ). A Bipartite nuclear localization signal motif is present at residues 158 to 175 (RRTPSPRRRRSQSPRRRR). Tandem repeats lie at residues 162 to 169 (SPRRRRSQ) and 170 to 177 (SPRRRRSQ). Positions 177-183 (QSRGSQC) are RNA binding.

It belongs to the orthohepadnavirus core antigen family. As to quaternary structure, homodimerizes, then multimerizes. Interacts with cytosol exposed regions of viral L glycoprotein present in the reticulum-to-Golgi compartment. Interacts with human FLNB. Phosphorylated form interacts with host importin alpha; this interaction depends on the exposure of the NLS, which itself depends upon genome maturation and/or phosphorylation of the capsid protein. Interacts with host NUP153. Post-translationally, phosphorylated by host SRPK1, SRPK2, and maybe protein kinase C or GAPDH. Phosphorylation is critical for pregenomic RNA packaging. Protein kinase C phosphorylation is stimulated by HBx protein and may play a role in transport of the viral genome to the nucleus at the late step during the viral replication cycle.

It localises to the virion. The protein resides in the host cytoplasm. Its function is as follows. Self assembles to form an icosahedral capsid. Most capsids appear to be large particles with an icosahedral symmetry of T=4 and consist of 240 copies of capsid protein, though a fraction forms smaller T=3 particles consisting of 180 capsid proteins. Entering capsids are transported along microtubules to the nucleus. Phosphorylation of the capsid is thought to induce exposure of nuclear localization signal in the C-terminal portion of the capsid protein that allows binding to the nuclear pore complex via the importin (karyopherin-) alpha and beta. Capsids are imported in intact form through the nuclear pore into the nuclear basket, where it probably binds NUP153. Only capsids that contain the mature viral genome can release the viral DNA and capsid protein into the nucleoplasm. Immature capsids get stuck in the basket. Capsids encapsulate the pre-genomic RNA and the P protein. Pre-genomic RNA is reverse-transcribed into DNA while the capsid is still in the cytoplasm. The capsid can then either be directed to the nucleus, providing more genomes for transcription, or bud through the endoplasmic reticulum to provide new virions. The sequence is that of Capsid protein from Homo sapiens (Human).